The sequence spans 360 residues: Cuticle collagen dpy-2 (360 aa).

Triple-helical region stretches follow at residues 123–152 (GERG…PGTT), 174–230 (GPRG…KGRT), and 238–303 (GPPG…PGTC). Disordered regions lie at residues 127-158 (PSGD…ASCI) and 174-360 (GPRG…IRKW). Residues 189-198 (GEYGIGGRPG) show a composition bias toward gly residues. Over residues 242–258 (DSGLPGPWGPPGSAGMP) the composition is skewed to low complexity. The span at 273 to 288 (PGPPGAPGPGGMPGPN) shows a compositional bias: pro residues.

It belongs to the cuticular collagen family. In terms of assembly, collagen polypeptide chains are complexed within the cuticle by disulfide bonds and other types of covalent cross-links.

In terms of biological role, nematode cuticles are composed largely of collagen-like proteins. The cuticle functions both as an exoskeleton and as a barrier to protect the worm from its environment. Mutations in dpy-2 affects the body shape. The protein is Cuticle collagen dpy-2 (dpy-2) of Caenorhabditis elegans.